A 518-amino-acid chain; its full sequence is Cytochrome P450 CYP72A219 (518 aa).

Residues 2–22 (ELVLKLISSFCAIVVVILLGW) form a helical membrane-spanning segment. Cys465 serves as a coordination point for heme.

This sequence belongs to the cytochrome P450 family. The cofactor is heme.

Its subcellular location is the membrane. Probable heme-thiolate monooxygenase. The chain is Cytochrome P450 CYP72A219 from Panax ginseng (Korean ginseng).